The sequence spans 257 residues: Major prion protein (257 aa).

An N-terminal signal peptide occupies residues 1-24 (MVKSHIGSWLLVLFVATWSDIGFC). The interaction with GRB2, ERI3 and SYN1 stretch occupies residues 25 to 234 (KKRPKPGGGW…ESEAYYQRGA (210 aa)). Residues 27–114 (RPKPGGGWNT…KPSKPKTNMK (88 aa)) are disordered. 5 tandem repeats follow at residues 54 to 62 (PQGGGGWGQ), 63 to 70 (PHGGGWGQ), 71 to 78 (PHGGGWGQ), 79 to 86 (PHGGGWGQ), and 87 to 95 (PHGGGGWGQ). The interval 54 to 95 (PQGGGGWGQPHGGGWGQPHGGGWGQPHGGGWGQPHGGGGWGQ) is 5 X 8 AA tandem repeats of P-H-G-G-G-W-G-Q. The span at 55 to 101 (QGGGGWGQPHGGGWGQPHGGGWGQPHGGGWGQPHGGGGWGQGGGSHG) shows a compositional bias: gly residues. Positions 64, 65, 66, 72, 73, 74, 80, 81, 82, 88, 90, and 91 each coordinate Cu(2+). An intrachain disulfide couples cysteine 183 to cysteine 218. N-linked (GlcNAc...) asparagine glycosylation is found at asparagine 185 and asparagine 201. Alanine 234 carries the GPI-anchor amidated alanine lipid modification. A propeptide spans 235 to 257 (SAILFSPPPVILLISLLILLIVG) (removed in mature form).

Belongs to the prion family. In terms of assembly, monomer and homodimer. Has a tendency to aggregate into amyloid fibrils containing a cross-beta spine, formed by a steric zipper of superposed beta-strands. Soluble oligomers may represent an intermediate stage on the path to fibril formation. Copper binding may promote oligomerization. Interacts with GRB2, APP, ERI3/PRNPIP and SYN1. Mislocalized cytosolically exposed PrP interacts with MGRN1; this interaction alters MGRN1 subcellular location and causes lysosomal enlargement. Interacts with KIAA1191.

Its subcellular location is the cell membrane. It localises to the golgi apparatus. Its function is as follows. Its primary physiological function is unclear. Has cytoprotective activity against internal or environmental stresses. May play a role in neuronal development and synaptic plasticity. May be required for neuronal myelin sheath maintenance. May play a role in iron uptake and iron homeostasis. Soluble oligomers are toxic to cultured neuroblastoma cells and induce apoptosis (in vitro). Association with GPC1 (via its heparan sulfate chains) targets PRNP to lipid rafts. Also provides Cu(2+) or Zn(2+) for the ascorbate-mediated GPC1 deaminase degradation of its heparan sulfate side chains. The sequence is that of Major prion protein (PRNP) from Mustela putorius furo (European domestic ferret).